Reading from the N-terminus, the 258-residue chain is MANKRTPIFIAGILIPILLNGCSSGKNKAYLDPKVFPPQVEGGPTVPSPDEPGLPLPGPGPALPTNGAIPIPEPGTAPAVSLMNMDGSVLTMWSRGAGSSLWAYYIGDSNSFGELRNWQIMPGTRPNTIQFRNVDVGTCMTSFPGFKGGVQLSTAPCKFGPERFDFQPMATRNGNYQLKSLSTGLCIRANFLGRTPSSPYATTLTMERCPSSGEKNFEFMWSISEPLRPALATIAKPEIRPFPPQPIEPDEHSTGGEQ.

Positions 1 to 21 (MANKRTPIFIAGILIPILLNG) are cleaved as a signal peptide. C22 carries N-palmitoyl cysteine lipidation. Residue C22 is the site of S-diacylglycerol cysteine attachment. Residues 40–71 (VEGGPTVPSPDEPGLPLPGPGPALPTNGAIPI) form a disordered region. Positions 46–62 (VPSPDEPGLPLPGPGPA) are enriched in pro residues. The interval 93-104 (WSRGAGSSLWAY) is mediates binding to target cells. One can recognise a Ricin B-type lectin domain in the interval 125 to 223 (RPNTIQFRNV…EKNFEFMWSI (99 aa)). The interval 236 to 258 (KPEIRPFPPQPIEPDEHSTGGEQ) is disordered. Basic and acidic residues predominate over residues 249 to 258 (PDEHSTGGEQ).

In terms of assembly, heterotrimer of 3 subunits, CdtA, CdtB and CdtC.

It localises to the cell outer membrane. Its function is as follows. CDTs are cytotoxins which induce host cell distension, growth arrest in G2/M phase, nucleus swelling, and chromatin fragmentation in HeLa cells. CdtA, along with CdtC, probably forms a heterodimeric subunit required for the delivery of CdtB. In Escherichia coli, this protein is Cytolethal distending toxin subunit A (cdtA).